The chain runs to 346 residues: Annexin A1 (346 aa).

At alanine 2 the chain carries N-acetylalanine. Serine 5 is modified (phosphoserine; by TRPM7). An Isoglutamyl lysine isopeptide (Gln-Lys) (interchain with K-?) cross-link involves residue glutamine 19. At tyrosine 21 the chain carries Phosphotyrosine. Residue serine 27 is modified to Phosphoserine; by PKC. Residues serine 34 and serine 37 each carry the phosphoserine modification. 4 Annexin repeats span residues 42–113 (FNVS…AMLK), 114–185 (TPAQ…ALAK), 197–269 (DLAD…TIVK), and 273–344 (STPA…ALCG). At lysine 58 the chain carries N6-acetyllysine. Glycine 59, valine 60, glutamate 62, arginine 97, leucine 100, glutamate 105, methionine 127, glycine 129, glycine 131, threonine 132, and glutamate 134 together coordinate Ca(2+). The residue at position 136 (threonine 136) is a Phosphothreonine. Ca(2+) is bound by residues aspartate 171, glycine 210, and arginine 213. Lysine 214 participates in a covalent cross-link: Glycyl lysine isopeptide (Lys-Gly) (interchain with G-Cter in SUMO1); alternate. Residue lysine 214 forms a Glycyl lysine isopeptide (Lys-Gly) (interchain with G-Cter in SUMO2); alternate linkage. Positions 215, 253, 255, and 256 each coordinate Ca(2+). Lysine 257 participates in a covalent cross-link: Glycyl lysine isopeptide (Lys-Gly) (interchain with G-Cter in SUMO1). Ca(2+) is bound by residues glutamate 261, methionine 286, glycine 288, and glycine 290. Lysine 312 is modified (N6-acetyllysine). Cysteine 324 and cysteine 343 are oxidised to a cystine. Positions 328, 330, and 331 each coordinate Ca(2+). Residue lysine 332 forms a Glycyl lysine isopeptide (Lys-Gly) (interchain with G-Cter in SUMO1) linkage. Glutamate 336 is a Ca(2+) binding site.

This sequence belongs to the annexin family. Homodimer; non-covalently linked. Homodimer; linked by transglutamylation. Homodimers linked by transglutamylation are observed in placenta, but not in other tissues. Interacts with S100A11. Heterotetramer, formed by two molecules each of S100A11 and ANXA1. Interacts with DYSF. Interacts with EGFR. Post-translationally, phosphorylated by protein kinase C, EGFR and TRPM7. Phosphorylated in response to EGF treatment. In terms of processing, sumoylated. Proteolytically cleaved by cathepsin CTSG to release the active N-terminal peptide Ac2-26. As to expression, detected in lung. Detected at the apical membrane of airway epithelial cells. Detected in intestinal epithelial cells. Detected in skeletal muscle. Detected in prostate. Detected in thymus (at protein level). Detected in stomach, lung, spleen, ovary and uterus, and at lower levels in kidney, thymus and heart.

The protein localises to the nucleus. It is found in the cytoplasm. It localises to the cell projection. The protein resides in the cilium. Its subcellular location is the basolateral cell membrane. The protein localises to the lateral cell membrane. It is found in the cell membrane. It localises to the apical cell membrane. The protein resides in the membrane. Its subcellular location is the early endosome. The protein localises to the cytoplasmic vesicle membrane. It is found in the endosome membrane. It localises to the secreted. The protein resides in the extracellular space. Its subcellular location is the extracellular exosome. The protein localises to the cytoplasmic vesicle. It is found in the secretory vesicle lumen. It localises to the phagocytic cup. Its function is as follows. Plays important roles in the innate immune response as effector of glucocorticoid-mediated responses and regulator of the inflammatory process. Has anti-inflammatory activity. Plays a role in glucocorticoid-mediated down-regulation of the early phase of the inflammatory response. Contributes to the adaptive immune response by enhancing signaling cascades that are triggered by T-cell activation, regulates differentiation and proliferation of activated T-cells. Promotes the differentiation of T-cells into Th1 cells and negatively regulates differentiation into Th2 cells. Has no effect on unstimulated T-cells. Negatively regulates hormone exocytosis via activation of the formyl peptide receptors and reorganization of the actin cytoskeleton. Has high affinity for Ca(2+) and can bind up to eight Ca(2+) ions. Displays Ca(2+)-dependent binding to phospholipid membranes. Plays a role in the formation of phagocytic cups and phagosomes. Plays a role in phagocytosis by mediating the Ca(2+)-dependent interaction between phagosomes and the actin cytoskeleton. Functionally, functions at least in part by activating the formyl peptide receptors and downstream signaling cascades. Promotes chemotaxis of granulocytes and monocytes via activation of the formyl peptide receptors. Promotes rearrangement of the actin cytoskeleton, cell polarization and cell migration. Promotes resolution of inflammation and wound healing. Acts via neutrophil N-formyl peptide receptors to enhance the release of CXCL2. In Mus musculus (Mouse), this protein is Annexin A1 (Anxa1).